Reading from the N-terminus, the 328-residue chain is Formyltetrahydrofolate deformylase 2, mitochondrial (328 aa).

A mitochondrion-targeting transit peptide spans 1–12 (MIRRVSTTSCLS). Residues 46–129 (FHVFHCPDVV…SVVRVPSLDP (84 aa)) enclose the ACT domain. Asp272 is a catalytic residue.

This sequence belongs to the PurU family. In terms of tissue distribution, expressed in leaves, cotyledons, roots, seeds and flowers.

The protein localises to the mitochondrion. It catalyses the reaction (6R)-10-formyltetrahydrofolate + H2O = (6S)-5,6,7,8-tetrahydrofolate + formate + H(+). Its function is as follows. Deformylase involved in photorespiration. Prevents excessive accumulation of 5-formyl tetrahydrofolate (THF), a potent inhibitor of the Gly decarboxylase/Ser hydroxymethyltransferase complex. The protein is Formyltetrahydrofolate deformylase 2, mitochondrial (PURU2) of Arabidopsis thaliana (Mouse-ear cress).